A 533-amino-acid chain; its full sequence is MAKKARIVIIGAGMAGLTAANKLYTSSNNTFELSVVEGGSRIGGRINTSEFSSEKIEMGATWIHGIGGSPVYRIAKETGSLVSDEPWECMDSTIDKAKTFAEGGFEIEPSIVESISGLFTALMELAQGKEISQSDADLSRLAHIYETATRVCSKGSSTSVGSFLKSGFDAYWDSISNGGEEGVKGYGKWSRKSLEEAIFTMFSNTQRTYTSADELSTLDFAAESEYQMFPGEEITIAKGYLSVIHHLASVLPQGVIQLNRKVTKIEWQSNEVKLHFSDGSVVFADHVIVTVSLGVLKAGIETDAELFSPPLPDFKSDAIRRLGYGVVNKLFVEMSQRKFPSLQLVFDREDSEFRFVKIPWWMRRTATITPIHSNSKVLLSWFAGKEALELEKLTDEEIKDAVMTTISCLTGKEVKNDTAKPLTNGSLNDDDEAMKITKVLKSKWGSDPLFRGSYSYVAVGSSGDDLDAMAEPLPKINKKVGQVNGHDQAKVHELQVMFAGEATHRTHYSTTHGAYYSGLREANRLLKHYKCNF.

E37, R45, V262, and E501 together coordinate FAD.

The protein belongs to the flavin monoamine oxidase family. The cofactor is FAD. Expressed in root vasculature, leaves and stems.

The protein resides in the cytoplasm. The catalysed reaction is spermine + O2 + H2O = 3-aminopropanal + spermidine + H2O2. It catalyses the reaction N(1)-acetylspermine + O2 + H2O = 3-acetamidopropanal + spermidine + H2O2. It carries out the reaction norspermine + O2 + H2O = norspermidine + 3-aminopropanal + H2O2. The enzyme catalyses thermospermine + O2 + H2O = 3-aminopropanal + spermidine + H2O2. The protein operates within amine and polyamine degradation; spermine degradation. Functionally, flavoenzyme involved in polyamine back-conversion. Catalyzes the oxidation of the secondary amino group of polyamines, such as spermine and its acetyl derivatives. Substrate preference is spermine &gt; N(1)-acetylspermine &gt; thermospermine &gt; norspermine. Plays an important role in the regulation of polyamine intracellular concentration. Involved in xylem differentiation by controlling thermospermine homeostasis, and participating in the tightly controlled interplay between auxin and cytokinin that is necessary for proper xylem differentiation. Involved in the production of hydrogen peroxide in response to salt and cold stresses. The protein is Probable polyamine oxidase 5 of Arabidopsis thaliana (Mouse-ear cress).